Here is a 170-residue protein sequence, read N- to C-terminus: Ribosomal RNA small subunit methyltransferase G (170 aa).

Residues glycine 70, leucine 75, 120 to 121 (AE), and arginine 138 contribute to the S-adenosyl-L-methionine site.

Belongs to the methyltransferase superfamily. RNA methyltransferase RsmG family.

The protein resides in the cytoplasm. Specifically methylates the N7 position of guanine in position 518 of 16S rRNA. The protein is Ribosomal RNA small subunit methyltransferase G of Mycobacterium ulcerans (strain Agy99).